Here is a 179-residue protein sequence, read N- to C-terminus: Ubiquitin-conjugating enzyme E2 C (179 aa).

The disordered stretch occupies residues 1–31 (MASQNRDPAATSVAAARKGAEPSGGAARGPV). A2 carries the post-translational modification N-acetylalanine. Phosphoserine is present on S3. Residues 30 to 175 (PVGKRLQQEL…LQETYSKQVT (146 aa)) enclose the UBC core domain. C114 (glycyl thioester intermediate) is an active-site residue.

Belongs to the ubiquitin-conjugating enzyme family. As to quaternary structure, component of the APC/C complex, composed of at least 14 distinct subunits that assemble into a complex of at least 19 chains with a combined molecular mass of around 1.2 MDa. Within this complex, directly interacts with ANAPC2. In terms of processing, autoubiquitinated by the APC/C complex, leading to its degradation by the proteasome. Its degradation plays a central role in APC/C regulation, allowing cyclin-A accumulation before S phase entry. APC/C substrates inhibit the autoubiquitination of UBE2C/UBCH10 but not its E2 function, hence APC/C remaining active until its substrates have been destroyed.

It carries out the reaction S-ubiquitinyl-[E1 ubiquitin-activating enzyme]-L-cysteine + [E2 ubiquitin-conjugating enzyme]-L-cysteine = [E1 ubiquitin-activating enzyme]-L-cysteine + S-ubiquitinyl-[E2 ubiquitin-conjugating enzyme]-L-cysteine.. The enzyme catalyses S-ubiquitinyl-[E1 ubiquitin-activating enzyme]-L-cysteine + [acceptor protein]-L-lysine = [E1 ubiquitin-activating enzyme]-L-cysteine + N(6)-monoubiquitinyl-[acceptor protein]-L-lysine.. It participates in protein modification; protein ubiquitination. Functionally, accepts ubiquitin from the E1 complex and catalyzes its covalent attachment to other proteins. In vitro catalyzes 'Lys-11'- and 'Lys-48'-linked polyubiquitination. Acts as an essential factor of the anaphase promoting complex/cyclosome (APC/C), a cell cycle-regulated ubiquitin ligase that controls progression through mitosis. Acts by initiating 'Lys-11'-linked polyubiquitin chains on APC/C substrates, leading to the degradation of APC/C substrates by the proteasome and promoting mitotic exit. This Homo sapiens (Human) protein is Ubiquitin-conjugating enzyme E2 C (UBE2C).